Here is a 515-residue protein sequence, read N- to C-terminus: Maturase K (515 aa).

Belongs to the intron maturase 2 family. MatK subfamily.

Its subcellular location is the plastid. The protein localises to the chloroplast. In terms of biological role, usually encoded in the trnK tRNA gene intron. Probably assists in splicing its own and other chloroplast group II introns. This chain is Maturase K, found in Picea abies (Norway spruce).